A 152-amino-acid chain; its full sequence is Ribosome maturation factor RimP (152 aa).

Belongs to the RimP family.

The protein resides in the cytoplasm. Required for maturation of 30S ribosomal subunits. This Burkholderia cenocepacia (strain ATCC BAA-245 / DSM 16553 / LMG 16656 / NCTC 13227 / J2315 / CF5610) (Burkholderia cepacia (strain J2315)) protein is Ribosome maturation factor RimP.